Consider the following 432-residue polypeptide: Asparagine--tRNA ligase (432 aa).

This sequence belongs to the class-II aminoacyl-tRNA synthetase family. Homodimer.

Its subcellular location is the cytoplasm. It carries out the reaction tRNA(Asn) + L-asparagine + ATP = L-asparaginyl-tRNA(Asn) + AMP + diphosphate + H(+). The protein is Asparagine--tRNA ligase of Lacticaseibacillus paracasei (strain ATCC 334 / BCRC 17002 / CCUG 31169 / CIP 107868 / KCTC 3260 / NRRL B-441) (Lactobacillus paracasei).